Reading from the N-terminus, the 150-residue chain is MQIILLKKIINKGNIGDKIKVKAGYARNFLFPKKIAIIASEKNLKFFEKKRKILEEQSKYENFKLKERFRNIKSLKEIEIYCKAGSKGKLFGSIGANHIIEKIKERGIRIMKNEIKLTNGPLKTIGKHNIKIKVKSNMCTEICVILKNNI.

It belongs to the bacterial ribosomal protein bL9 family.

Functionally, binds to the 23S rRNA. The sequence is that of Large ribosomal subunit protein bL9 from Wigglesworthia glossinidia brevipalpis.